Here is a 399-residue protein sequence, read N- to C-terminus: Odorant receptor 42b (399 aa).

The Cytoplasmic segment spans residues 1–45 (MVFELIRPAPLTEQKRSRDGCIYLYRAMKFIGWLPPKQGVLRYVY). The helical transmembrane segment at 46–66 (LTWTLMTFVWCTTYLPLGFLG) threads the bilayer. Over 67 to 83 (SYMTQIKSFSPGEFLTS) the chain is Extracellular. The helical transmembrane segment at 84-104 (LQVCINAYGSSVKVAITYSML) threads the bilayer. Residues 105-140 (WRLIKAKNILDQLDLRCTAMEEREKIHLVVARSNHA) lie on the Cytoplasmic side of the membrane. A helical membrane pass occupies residues 141–161 (FLIFTFVYCGYAGSTYLSSVL). Topologically, residues 162–178 (SGRPPWQLYNPFIDWHD) are extracellular. Residues 179–199 (GTLKLWVASTLEYMVMSGAVL) traverse the membrane as a helical segment. Residues 200 to 268 (QDQLSDSYPL…AIIKPVIQGT (69 aa)) are Cytoplasmic-facing. The chain crosses the membrane as a helical span at residues 269-289 (IFTQFLLIGLVLGFTLINVFF). Topologically, residues 290–292 (FSD) are extracellular. The helical transmembrane segment at 293 to 313 (IWTGIASFMFVITILLQTFPF) threads the bilayer. At 314–356 (CYTCNLIMEDCESLTHAIFQSNWVDASRRYKTTLLYFLQNVQQ) the chain is on the cytoplasmic side. Residues 357-377 (PIVFIAGGIFQISMSSNISVA) traverse the membrane as a helical segment. Residues 378 to 399 (KFAFSVITITKQMNIADKFKTD) are Extracellular-facing.

It belongs to the insect chemoreceptor superfamily. Heteromeric odorant receptor channel (TC 1.A.69) family. Or2a subfamily. In terms of assembly, interacts with Orco. Complexes exist early in the endomembrane system in olfactory sensory neurons (OSNs), coupling these complexes to the conserved ciliary trafficking pathway. In terms of tissue distribution, expressed in olfactory sensory neurons in the antenna.

The protein localises to the cell membrane. Functionally, odorant receptor which mediates acceptance or avoidance behavior, depending on its substrates. The odorant receptor repertoire encodes a large collection of odor stimuli that vary widely in identity, intensity, and duration. May form a complex with Orco to form odorant-sensing units, providing sensitive and prolonged odorant signaling and calcium permeability. Involved in the behavioral responses to ethyl acetate and pentyl acetate. This chain is Odorant receptor 42b (Or42b), found in Drosophila melanogaster (Fruit fly).